The chain runs to 252 residues: Pyrroloquinoline-quinone synthase (252 aa).

The protein belongs to the PqqC family.

The enzyme catalyses 6-(2-amino-2-carboxyethyl)-7,8-dioxo-1,2,3,4,7,8-hexahydroquinoline-2,4-dicarboxylate + 3 O2 = pyrroloquinoline quinone + 2 H2O2 + 2 H2O + H(+). Its pathway is cofactor biosynthesis; pyrroloquinoline quinone biosynthesis. Its function is as follows. Ring cyclization and eight-electron oxidation of 3a-(2-amino-2-carboxyethyl)-4,5-dioxo-4,5,6,7,8,9-hexahydroquinoline-7,9-dicarboxylic-acid to PQQ. In Acinetobacter baumannii (strain AB307-0294), this protein is Pyrroloquinoline-quinone synthase.